Reading from the N-terminus, the 249-residue chain is 5'-nucleotidase SurE (249 aa).

D8, D9, S39, and N91 together coordinate a divalent metal cation.

Belongs to the SurE nucleotidase family. A divalent metal cation serves as cofactor.

It localises to the cytoplasm. It catalyses the reaction a ribonucleoside 5'-phosphate + H2O = a ribonucleoside + phosphate. Its function is as follows. Nucleotidase that shows phosphatase activity on nucleoside 5'-monophosphates. The polypeptide is 5'-nucleotidase SurE (Haemophilus influenzae (strain ATCC 51907 / DSM 11121 / KW20 / Rd)).